The primary structure comprises 689 residues: Transcription termination factor Rho (689 aa).

The segment covering 1 to 20 has biased composition (polar residues); it reads MPRTPKNQNLEQNTQTQSLT. Disordered regions lie at residues 1 to 90 and 151 to 213; these read MPRT…KQPV and AQAQ…NRNN. Residues 52 to 65 are compositionally biased toward basic residues; it reads PKRRGRKPNPKTKA. Composition is skewed to low complexity over residues 170-183 and 191-213; these read NAQQ…QNGE and NNQN…NRNN. The region spanning 287–362 is the Rho RNA-BD domain; sequence IIYTEGVLEV…RRIDRVNFEE (76 aa). Residues 405 to 410, 417 to 422, and Arg448 each bind ATP; these read GKGQRS and RTGKTV.

Belongs to the Rho family. In terms of assembly, homohexamer. The homohexamer assembles into an open ring structure.

Its function is as follows. Facilitates transcription termination by a mechanism that involves Rho binding to the nascent RNA, activation of Rho's RNA-dependent ATPase activity, and release of the mRNA from the DNA template. This is Transcription termination factor Rho from Fibrobacter succinogenes (strain ATCC 19169 / S85).